The sequence spans 417 residues: Gamma-glutamyl phosphate reductase (417 aa).

It belongs to the gamma-glutamyl phosphate reductase family.

The protein resides in the cytoplasm. It carries out the reaction L-glutamate 5-semialdehyde + phosphate + NADP(+) = L-glutamyl 5-phosphate + NADPH + H(+). Its pathway is amino-acid biosynthesis; L-proline biosynthesis; L-glutamate 5-semialdehyde from L-glutamate: step 2/2. In terms of biological role, catalyzes the NADPH-dependent reduction of L-glutamate 5-phosphate into L-glutamate 5-semialdehyde and phosphate. The product spontaneously undergoes cyclization to form 1-pyrroline-5-carboxylate. This chain is Gamma-glutamyl phosphate reductase, found in Streptococcus agalactiae serotype Ia (strain ATCC 27591 / A909 / CDC SS700).